The chain runs to 430 residues: Adenylosuccinate synthetase (430 aa).

GTP-binding positions include 13–19 (GDEGKGK) and 41–43 (GHT). The active-site Proton acceptor is the D14. Positions 14 and 41 each coordinate Mg(2+). IMP contacts are provided by residues 14 to 17 (DEGK), 39 to 42 (NAGH), T130, R144, Q225, T240, and R304. H42 functions as the Proton donor in the catalytic mechanism. Position 300 to 306 (300 to 306 (ATTGRKR)) interacts with substrate. GTP contacts are provided by residues R306, 332 to 334 (KLD), and 414 to 416 (STG).

Belongs to the adenylosuccinate synthetase family. As to quaternary structure, homodimer. Mg(2+) is required as a cofactor.

The protein localises to the cytoplasm. It carries out the reaction IMP + L-aspartate + GTP = N(6)-(1,2-dicarboxyethyl)-AMP + GDP + phosphate + 2 H(+). It participates in purine metabolism; AMP biosynthesis via de novo pathway; AMP from IMP: step 1/2. Its function is as follows. Plays an important role in the de novo pathway of purine nucleotide biosynthesis. Catalyzes the first committed step in the biosynthesis of AMP from IMP. The polypeptide is Adenylosuccinate synthetase (Teredinibacter turnerae (strain ATCC 39867 / T7901)).